The following is a 1358-amino-acid chain: DNA-directed RNA polymerase subunit beta (1358 aa).

This sequence belongs to the RNA polymerase beta chain family. In terms of assembly, the RNAP catalytic core consists of 2 alpha, 1 beta, 1 beta' and 1 omega subunit. When a sigma factor is associated with the core the holoenzyme is formed, which can initiate transcription.

The enzyme catalyses RNA(n) + a ribonucleoside 5'-triphosphate = RNA(n+1) + diphosphate. Functionally, DNA-dependent RNA polymerase catalyzes the transcription of DNA into RNA using the four ribonucleoside triphosphates as substrates. In Chromohalobacter salexigens (strain ATCC BAA-138 / DSM 3043 / CIP 106854 / NCIMB 13768 / 1H11), this protein is DNA-directed RNA polymerase subunit beta.